A 385-amino-acid chain; its full sequence is Rhomboid domain-containing protein 3 (385 aa).

5 helical membrane passes run A13–A33, L58–W78, S93–S113, W146–L166, and L168–L188. The UBA domain occupies S322–G361.

It localises to the membrane. This Rattus norvegicus (Rat) protein is Rhomboid domain-containing protein 3 (Rhbdd3).